Reading from the N-terminus, the 266-residue chain is Enterotoxin type C-2 (266 aa).

The first 27 residues, Met-1–Ala-27, serve as a signal peptide directing secretion. Zn(2+) contacts are provided by Asp-36, His-74, Glu-98, Glu-107, and Asp-110. Cysteines 120 and 137 form a disulfide. Zn(2+) contacts are provided by His-145, Glu-146, and His-149.

It belongs to the staphylococcal/streptococcal toxin family. Interacts with host MHC class II molecules composed of alpha/HLA-DRA and beta/HLA-DRB1 chains. Requires Zn(2+) as cofactor.

The protein localises to the secreted. Its function is as follows. Staphylococcal enterotoxin that activates the host immune system by binding as unprocessed molecules to major histocompatibility (MHC) complex class II and T-cell receptor (TCR) molecules. In turn, this ternary complex activates a large number of T-lymphocytes initiating a systemic release of pro-inflammatory cytokines. Also causes the intoxication staphylococcal food poisoning syndrome. This Staphylococcus aureus protein is Enterotoxin type C-2 (entC2).